The sequence spans 235 residues: Phosphoribosylaminoimidazole-succinocarboxamide synthase (235 aa).

It belongs to the SAICAR synthetase family.

It catalyses the reaction 5-amino-1-(5-phospho-D-ribosyl)imidazole-4-carboxylate + L-aspartate + ATP = (2S)-2-[5-amino-1-(5-phospho-beta-D-ribosyl)imidazole-4-carboxamido]succinate + ADP + phosphate + 2 H(+). Its pathway is purine metabolism; IMP biosynthesis via de novo pathway; 5-amino-1-(5-phospho-D-ribosyl)imidazole-4-carboxamide from 5-amino-1-(5-phospho-D-ribosyl)imidazole-4-carboxylate: step 1/2. The protein is Phosphoribosylaminoimidazole-succinocarboxamide synthase of Streptococcus gordonii (strain Challis / ATCC 35105 / BCRC 15272 / CH1 / DL1 / V288).